The primary structure comprises 114 residues: UPF0102 protein Amet_2739 (114 aa).

It belongs to the UPF0102 family.

This Alkaliphilus metalliredigens (strain QYMF) protein is UPF0102 protein Amet_2739.